The primary structure comprises 82 residues: UPF0180 protein BT9727_1277 (82 aa).

It belongs to the UPF0180 family.

This chain is UPF0180 protein BT9727_1277, found in Bacillus thuringiensis subsp. konkukian (strain 97-27).